Reading from the N-terminus, the 124-residue chain is Max-like protein 1 (124 aa).

Over residues 1–10 (MSDMSDLEDD) the composition is skewed to acidic residues. The segment at 1–44 (MSDMSDLEDDQTGHCGSGEHSGPFDPKRHAREQHNALERRRRDN) is disordered. The basic motif stretch occupies residues 29–42 (HAREQHNALERRRR). In terms of domain architecture, bHLH spans 29–82 (HAREQHNALERRRRDNIKDMYTSLREVVPDANGERVQASRAVILKKAIESIEKG). Positions 32–44 (EQHNALERRRRDN) are enriched in basic and acidic residues. The helix-loop-helix motif stretch occupies residues 43–82 (DNIKDMYTSLREVVPDANGERVQASRAVILKKAIESIEKG). Positions 86–113 (SATLSVDVAEQESKNAKLREEIARLKAK) form a coiled coil.

This sequence belongs to the MAX family. As to quaternary structure, heterodimer with mdl-1 in presence and absence of DNA. Interacts with tdpt-1; the interaction promotes axon regeneration after injury. Expressed in D-type motor neurons.

It localises to the nucleus. Transcriptional regulator which binds to the E box motif 5'-CACGTG-3', when in a heterodimeric complex with mdl-1. Involved in the control of lifespan in response to dietary restriction, the decline in protein homeostasis associated with normal aging and may overlap with the insulin-like signaling pathway. Involved in promoting infection by the microsporidian pathogen N.parisii. Required for the expression of svh-2 and the promotion of axon regeneration after injury. In Caenorhabditis elegans, this protein is Max-like protein 1.